A 453-amino-acid polypeptide reads, in one-letter code: Pup--protein ligase (453 aa).

Glu-9 provides a ligand contact to Mg(2+). Residue Arg-53 participates in ATP binding. Mg(2+) is bound at residue Tyr-55. The Proton acceptor role is filled by Asp-57. Glu-63 serves as a coordination point for Mg(2+). ATP-binding residues include Thr-66 and Trp-420.

The protein belongs to the Pup ligase/Pup deamidase family. Pup-conjugating enzyme subfamily.

It catalyses the reaction ATP + [prokaryotic ubiquitin-like protein]-L-glutamate + [protein]-L-lysine = ADP + phosphate + N(6)-([prokaryotic ubiquitin-like protein]-gamma-L-glutamyl)-[protein]-L-lysine.. Its pathway is protein degradation; proteasomal Pup-dependent pathway. It functions in the pathway protein modification; protein pupylation. Functionally, catalyzes the covalent attachment of the prokaryotic ubiquitin-like protein modifier Pup to the proteasomal substrate proteins, thereby targeting them for proteasomal degradation. This tagging system is termed pupylation. The ligation reaction involves the side-chain carboxylate of the C-terminal glutamate of Pup and the side-chain amino group of a substrate lysine. This is Pup--protein ligase from Streptomyces scabiei (strain 87.22).